Here is a 132-residue protein sequence, read N- to C-terminus: Protein NrdI (132 aa).

The protein belongs to the NrdI family.

In terms of biological role, probably involved in ribonucleotide reductase function. This is Protein NrdI from Staphylococcus aureus (strain Mu3 / ATCC 700698).